The primary structure comprises 312 residues: Lichenase-2 (312 aa).

The first 6 residues, proline 1 to serine 6, serve as a signal peptide directing secretion. Glutamate 99 serves as the catalytic Proton donor. Asparagine 196 carries N-linked (GlcNAc...) asparagine glycosylation. Glutamate 238 functions as the Nucleophile in the catalytic mechanism.

Belongs to the glycosyl hydrolase 17 family.

The enzyme catalyses Hydrolysis of (1-&gt;4)-beta-D-glucosidic linkages in beta-D-glucans containing (1-&gt;3)- and (1-&gt;4)-bonds.. The protein operates within glycan metabolism; beta-D-glucan degradation. Functions in plant cell wall hydrolysis during mobilization of the endosperm in germinating grain or during the growth of vegetative tissues. The protein is Lichenase-2 of Hordeum vulgare (Barley).